The primary structure comprises 360 residues: Transcription elongation factor, mitochondrial (360 aa).

The N-terminal 35 residues, 1–35 (MSGSVLFTAGERWRCFLTPSRSSLYWALHNFCCRK), are a transit peptide targeting the mitochondrion.

It belongs to the TEFM family. In terms of assembly, interacts with POLRMT.

Its subcellular location is the mitochondrion matrix. It localises to the mitochondrion nucleoid. Transcription elongation factor which increases mitochondrial RNA polymerase processivity. Regulates transcription of the mitochondrial genome, including genes important for the oxidative phosphorylation machinery. The chain is Transcription elongation factor, mitochondrial (TEFM) from Homo sapiens (Human).